The following is a 68-amino-acid chain: uncharacterized protein (68 aa).

This is an uncharacterized protein from Homo sapiens (Human).